The following is a 110-amino-acid chain: Cell division protein FtsB (110 aa).

Residues 1–3 are Cytoplasmic-facing; it reads MRL. Residues 4–21 form a helical membrane-spanning segment; the sequence is IILCLAALVLLIQFPLWL. At 22–110 the chain is on the periplasmic side; it reads GKGGWLRVWD…PPKIEPKEKR (89 aa). Residues 31-64 are a coiled coil; sequence DLDQQVIAAQKKNDELRARNAKLNSEVQDLKEGT.

This sequence belongs to the FtsB family. Part of a complex composed of FtsB, FtsL and FtsQ.

The protein localises to the cell inner membrane. Essential cell division protein. May link together the upstream cell division proteins, which are predominantly cytoplasmic, with the downstream cell division proteins, which are predominantly periplasmic. This Herminiimonas arsenicoxydans protein is Cell division protein FtsB.